Reading from the N-terminus, the 546-residue chain is ATP-dependent rRNA helicase RRP3 (546 aa).

Residues 1–108 (MSDFKRRKLE…DEEAEAQAAA (108 aa)) form a disordered region. Acidic residues-rich tracts occupy residues 60–77 (SEED…EEED) and 94–103 (EAEQSDEEAE). The Q motif signature appears at 115–143 (KTFADLGVREELCDACENLGYKTATPIQT). In terms of domain architecture, Helicase ATP-binding spans 146 to 318 (IPLALAGKDI…RAALKNPVRV (173 aa)). ATP is bound at residue 159-166 (AETGSGKT). The short motif at 265-268 (DEAD) is the DEAD box element. The Helicase C-terminal domain occupies 342–490 (YKDLYLIHLL…EEKVSRDEVM (149 aa)). Positions 504–515 (VREMKDLHDQRK) are enriched in basic and acidic residues. Residues 504-546 (VREMKDLHDQRKSGRGGRGGGRGGGRGGRGRGGRRDNMDMDEG) are disordered. A compositionally biased stretch (gly residues) spans 519-530 (GGRGGGRGGGRG). Residues 536–546 (GRRDNMDMDEG) are compositionally biased toward basic and acidic residues.

This sequence belongs to the DEAD box helicase family. DDX47/RRP3 subfamily. In terms of assembly, interacts with the SSU processome.

It is found in the nucleus. The enzyme catalyses ATP + H2O = ADP + phosphate + H(+). Its function is as follows. ATP-dependent rRNA helicase required for pre-ribosomal RNA processing. Involved in the maturation of the 35S-pre-rRNA and to its cleavage to mature 18S rRNA. The sequence is that of ATP-dependent rRNA helicase RRP3 from Phaeosphaeria nodorum (strain SN15 / ATCC MYA-4574 / FGSC 10173) (Glume blotch fungus).